A 303-amino-acid polypeptide reads, in one-letter code: 5-dehydro-4-deoxyglucarate dehydratase (303 aa).

The protein belongs to the DapA family.

It catalyses the reaction 5-dehydro-4-deoxy-D-glucarate + H(+) = 2,5-dioxopentanoate + CO2 + H2O. Its pathway is carbohydrate acid metabolism; D-glucarate degradation; 2,5-dioxopentanoate from D-glucarate: step 2/2. The protein is 5-dehydro-4-deoxyglucarate dehydratase of Pseudomonas putida (Arthrobacter siderocapsulatus).